The following is a 301-amino-acid chain: Phosphatidylglycerol--prolipoprotein diacylglyceryl transferase (301 aa).

Helical transmembrane passes span 17–37 (LAVR…IVVG), 59–79 (MLFY…VLFY), and 97–117 (GGMS…LFAY). Arg-142 provides a ligand contact to a 1,2-diacyl-sn-glycero-3-phospho-(1'-sn-glycerol). A run of 2 helical transmembrane segments spans residues 230–250 (MGAI…TVEF) and 265–285 (LSMG…LLVW).

Belongs to the Lgt family.

Its subcellular location is the cell inner membrane. The catalysed reaction is L-cysteinyl-[prolipoprotein] + a 1,2-diacyl-sn-glycero-3-phospho-(1'-sn-glycerol) = an S-1,2-diacyl-sn-glyceryl-L-cysteinyl-[prolipoprotein] + sn-glycerol 1-phosphate + H(+). It functions in the pathway protein modification; lipoprotein biosynthesis (diacylglyceryl transfer). In terms of biological role, catalyzes the transfer of the diacylglyceryl group from phosphatidylglycerol to the sulfhydryl group of the N-terminal cysteine of a prolipoprotein, the first step in the formation of mature lipoproteins. In Paraburkholderia phytofirmans (strain DSM 17436 / LMG 22146 / PsJN) (Burkholderia phytofirmans), this protein is Phosphatidylglycerol--prolipoprotein diacylglyceryl transferase.